The primary structure comprises 254 residues: MHERNTTTNTPLDVTAQKLLVAQRSVDTLVQEGVLHAHMSIGLGTGSTAMPAVKRIADHLARGTLSDIAAVPTSFQTALICERYNIPLFSLSSKRIGGKLDVTIDGADEIDTQNFVIKGGGAALLQEKIAAYNSAHFVIIVDETKVVETLGTRAALPIEVVPEARMSVMRTLQDWGLSVHIREAVRKKGPVVTDHGNFILDARWQSLPTRTPQDMERALNALPGVIENGLFTERTVRVFVAHADGSVEERSASF.

Residues 45 to 48 (TGST), 105 to 108 (DGAD), and 118 to 121 (KGGG) each bind substrate. The active-site Proton acceptor is E127. K145 contacts substrate.

It belongs to the ribose 5-phosphate isomerase family. Homodimer.

It catalyses the reaction aldehydo-D-ribose 5-phosphate = D-ribulose 5-phosphate. It functions in the pathway carbohydrate degradation; pentose phosphate pathway; D-ribose 5-phosphate from D-ribulose 5-phosphate (non-oxidative stage): step 1/1. In terms of biological role, catalyzes the reversible conversion of ribose-5-phosphate to ribulose 5-phosphate. This chain is Ribose-5-phosphate isomerase A, found in Treponema pallidum subsp. pallidum (strain SS14).